The sequence spans 425 residues: Trigger factor (425 aa).

Residues Gly163–Pro248 enclose the PPIase FKBP-type domain.

The protein belongs to the FKBP-type PPIase family. Tig subfamily.

It localises to the cytoplasm. The catalysed reaction is [protein]-peptidylproline (omega=180) = [protein]-peptidylproline (omega=0). Involved in protein export. Acts as a chaperone by maintaining the newly synthesized protein in an open conformation. Functions as a peptidyl-prolyl cis-trans isomerase. The sequence is that of Trigger factor from Bacillus cereus (strain G9842).